We begin with the raw amino-acid sequence, 381 residues long: Homoserine O-succinyltransferase (381 aa).

In terms of domain architecture, AB hydrolase-1 spans 45–360; that stretch reads NAVLVCHALN…PHGHDAFLLD (316 aa). The active-site Nucleophile is Ser-151. Arg-221 contributes to the substrate binding site. Residues Asp-321 and His-354 contribute to the active site. Residue Asp-355 coordinates substrate.

The protein belongs to the AB hydrolase superfamily. MetX family. Homodimer.

The protein resides in the cytoplasm. It catalyses the reaction L-homoserine + succinyl-CoA = O-succinyl-L-homoserine + CoA. It functions in the pathway amino-acid biosynthesis; L-methionine biosynthesis via de novo pathway; O-succinyl-L-homoserine from L-homoserine: step 1/1. Transfers a succinyl group from succinyl-CoA to L-homoserine, forming succinyl-L-homoserine. This chain is Homoserine O-succinyltransferase, found in Burkholderia mallei (strain NCTC 10247).